The chain runs to 346 residues: D-alanine--D-alanine ligase (346 aa).

One can recognise an ATP-grasp domain in the interval 133-326 (KFLAQKAGVK…LANSLPKERE (194 aa)). Position 159 to 209 (159 to 209 (YPIILKPARLGSSIGVSVVHDDSELAYAKDVAFEFDKDVLVEPFIKGVKEY)) interacts with ATP. Mg(2+) is bound by residues aspartate 282, glutamate 294, and asparagine 296.

This sequence belongs to the D-alanine--D-alanine ligase family. The cofactor is Mg(2+). Mn(2+) is required as a cofactor.

The protein localises to the cytoplasm. The enzyme catalyses 2 D-alanine + ATP = D-alanyl-D-alanine + ADP + phosphate + H(+). It functions in the pathway cell wall biogenesis; peptidoglycan biosynthesis. Functionally, cell wall formation. The polypeptide is D-alanine--D-alanine ligase (Campylobacter concisus (strain 13826)).